Consider the following 286-residue polypeptide: UDP-3-O-acyl-N-acetylglucosamine deacetylase (286 aa).

Zn(2+)-binding residues include H79, H237, and D241. The Proton donor role is filled by H264.

The protein belongs to the LpxC family. Zn(2+) serves as cofactor.

It catalyses the reaction a UDP-3-O-[(3R)-3-hydroxyacyl]-N-acetyl-alpha-D-glucosamine + H2O = a UDP-3-O-[(3R)-3-hydroxyacyl]-alpha-D-glucosamine + acetate. The protein operates within glycolipid biosynthesis; lipid IV(A) biosynthesis; lipid IV(A) from (3R)-3-hydroxytetradecanoyl-[acyl-carrier-protein] and UDP-N-acetyl-alpha-D-glucosamine: step 2/6. Catalyzes the hydrolysis of UDP-3-O-myristoyl-N-acetylglucosamine to form UDP-3-O-myristoylglucosamine and acetate, the committed step in lipid A biosynthesis. The polypeptide is UDP-3-O-acyl-N-acetylglucosamine deacetylase (Chlamydia muridarum (strain MoPn / Nigg)).